The primary structure comprises 339 residues: Methylthioribose-1-phosphate isomerase (339 aa).

Substrate is bound by residues Arg52–Ala54, Arg89, and Gln188. Residue Asp229 is the Proton donor of the active site. Asn239–Lys240 is a substrate binding site.

Belongs to the eIF-2B alpha/beta/delta subunits family. MtnA subfamily.

The catalysed reaction is 5-(methylsulfanyl)-alpha-D-ribose 1-phosphate = 5-(methylsulfanyl)-D-ribulose 1-phosphate. It participates in amino-acid biosynthesis; L-methionine biosynthesis via salvage pathway; L-methionine from S-methyl-5-thio-alpha-D-ribose 1-phosphate: step 1/6. Functionally, catalyzes the interconversion of methylthioribose-1-phosphate (MTR-1-P) into methylthioribulose-1-phosphate (MTRu-1-P). In Anaeromyxobacter sp. (strain K), this protein is Methylthioribose-1-phosphate isomerase.